A 117-amino-acid chain; its full sequence is Large ribosomal subunit protein eL34 (117 aa).

S12 is modified (phosphoserine). N6-acetyllysine occurs at positions 36 and 43. A Glycyl lysine isopeptide (Lys-Gly) (interchain with G-Cter in SUMO2) cross-link involves residue K108.

The protein belongs to the eukaryotic ribosomal protein eL34 family. In terms of assembly, component of the large ribosomal subunit.

The protein localises to the cytoplasm. It localises to the cytosol. Its subcellular location is the endoplasmic reticulum. Component of the large ribosomal subunit. The ribosome is a large ribonucleoprotein complex responsible for the synthesis of proteins in the cell. This Sus scrofa (Pig) protein is Large ribosomal subunit protein eL34 (RPL34).